The sequence spans 373 residues: DNA primase small subunit PriS (373 aa).

Catalysis depends on residues aspartate 95, aspartate 97, and aspartate 281.

The protein belongs to the eukaryotic-type primase small subunit family. As to quaternary structure, heterodimer of a small subunit (PriS) and a large subunit (PriL). It depends on Mg(2+) as a cofactor. Mn(2+) serves as cofactor.

Its function is as follows. Catalytic subunit of DNA primase, an RNA polymerase that catalyzes the synthesis of short RNA molecules used as primers for DNA polymerase during DNA replication. The small subunit contains the primase catalytic core and has DNA synthesis activity on its own. Binding to the large subunit stabilizes and modulates the activity, increasing the rate of DNA synthesis while decreasing the length of the DNA fragments, and conferring RNA synthesis capability. The DNA polymerase activity may enable DNA primase to also catalyze primer extension after primer synthesis. May also play a role in DNA repair. The polypeptide is DNA primase small subunit PriS (Nitrosopumilus maritimus (strain SCM1)).